Here is a 506-residue protein sequence, read N- to C-terminus: Ribose import ATP-binding protein RbsA 2 (506 aa).

2 consecutive ABC transporter domains span residues 6–241 (LSMT…VGRV) and 254–499 (EKSN…SITI). 38-45 (GENGAGKS) contributes to the ATP binding site.

It belongs to the ABC transporter superfamily. Ribose importer (TC 3.A.1.2.1) family. As to quaternary structure, the complex is composed of an ATP-binding protein (RbsA), two transmembrane proteins (RbsC) and a solute-binding protein (RbsB).

It localises to the cell inner membrane. It carries out the reaction D-ribose(out) + ATP + H2O = D-ribose(in) + ADP + phosphate + H(+). In terms of biological role, part of the ABC transporter complex RbsABC involved in ribose import. Responsible for energy coupling to the transport system. The chain is Ribose import ATP-binding protein RbsA 2 from Agrobacterium fabrum (strain C58 / ATCC 33970) (Agrobacterium tumefaciens (strain C58)).